Reading from the N-terminus, the 612-residue chain is Cytoplasmic dynein 1 intermediate chain 2 (612 aa).

Basic and acidic residues-rich tracts occupy residues 1-13 (MSDK…ELER) and 20-43 (QIRE…KKEA). The tract at residues 1-188 (MSDKSDLKAE…PHELTEEEKQ (188 aa)) is disordered. Ser-2 is modified (N-acetylserine). Ser-51 carries the diphosphoserine modification. 2 positions are modified to phosphoserine: Ser-51 and Ser-84. The span at 82–91 (PSSKSVSTPS) shows a compositional bias: low complexity. At Thr-89 the chain carries Phosphothreonine. Ser-91, Ser-95, and Ser-98 each carry phosphoserine. Residues 164-188 (EKTLKKDEENDSKAPPHELTEEEKQ) are compositionally biased toward basic and acidic residues. WD repeat units follow at residues 251-300 (SKHR…TTPE), 304-344 (HCQS…RTPV), 353-394 (AHTH…HPQD), 403-443 (SKAV…AGIS), 448-493 (GHQG…PLYS), 496-536 (DNSD…EVPT), and 542-581 (EGNP…AVPR).

This sequence belongs to the dynein intermediate chain family. In terms of assembly, homodimer. The cytoplasmic dynein 1 complex consists of two catalytic heavy chains (HCs) and a number of non-catalytic subunits presented by intermediate chains (ICs), light intermediate chains (LICs) and light chains (LCs); the composition seems to vary in respect to the IC, LIC and LC composition. The heavy chain homodimer serves as a scaffold for the probable homodimeric assembly of the respective non-catalytic subunits. The ICs and LICs bind directly to the HC dimer and the LCs assemble on the IC dimer. Interacts with DYNLT3. Interacts with DYNLT1. Interacts (dephosphorylated at Ser-84) with DCTN1. Interacts with BICD2. Interacts with SPEF2. Interacts with CFAP61. Post-translationally, the phosphorylation status of Ser-84 appears to be involved in dynactin-dependent target binding. Pyrophosphorylation by 5-diphosphoinositol pentakisphosphate (5-IP7) promotes interaction with DCTN1. Serine pyrophosphorylation is achieved by Mg(2+)-dependent, but enzyme independent transfer of a beta-phosphate from a inositol pyrophosphate to a pre-phosphorylated serine residue.

Its subcellular location is the cytoplasm. It localises to the cytoskeleton. Functionally, acts as one of several non-catalytic accessory components of the cytoplasmic dynein 1 complex that are thought to be involved in linking dynein to cargos and to adapter proteins that regulate dynein function. Cytoplasmic dynein 1 acts as a motor for the intracellular retrograde motility of vesicles and organelles along microtubules. The intermediate chains mediate the binding of dynein to dynactin via its 150 kDa component (p150-glued) DCTN1. Involved in membrane-transport, such as Golgi apparatus, late endosomes and lysosomes. The chain is Cytoplasmic dynein 1 intermediate chain 2 (Dync1i2) from Mus musculus (Mouse).